The following is a 356-amino-acid chain: 4-hydroxy-2-oxovalerate aldolase (356 aa).

The region spanning 7 to 257 (PRVTDTTLRD…NPGLDVFKLM (251 aa)) is the Pyruvate carboxyltransferase domain. Residue 15–16 (RD) participates in substrate binding. Position 16 (Asp16) interacts with Mn(2+). His19 serves as the catalytic Proton acceptor. Substrate is bound by residues Ser169 and His196. Mn(2+)-binding residues include His196 and His198. Tyr287 serves as a coordination point for substrate.

The protein belongs to the 4-hydroxy-2-oxovalerate aldolase family.

The catalysed reaction is (S)-4-hydroxy-2-oxopentanoate = acetaldehyde + pyruvate. The protein is 4-hydroxy-2-oxovalerate aldolase of Thermomicrobium roseum (strain ATCC 27502 / DSM 5159 / P-2).